We begin with the raw amino-acid sequence, 177 residues long: Nucleoside triphosphate/diphosphate phosphatase (177 aa).

The active-site Proton donor is the Arg-24. Positions 88, 104, 106, 108, 121, and 124 each coordinate Mg(2+).

This sequence belongs to the Ntdp family. Requires Mg(2+) as cofactor.

The enzyme catalyses a ribonucleoside 5'-triphosphate + H2O = a ribonucleoside 5'-diphosphate + phosphate + H(+). It carries out the reaction a ribonucleoside 5'-diphosphate + H2O = a ribonucleoside 5'-phosphate + phosphate + H(+). Has nucleoside phosphatase activity towards nucleoside triphosphates and nucleoside diphosphates. The chain is Nucleoside triphosphate/diphosphate phosphatase from Geobacillus sp. (strain WCH70).